Consider the following 176-residue polypeptide: Large ribosomal subunit protein uL6 (176 aa).

It belongs to the universal ribosomal protein uL6 family. As to quaternary structure, part of the 50S ribosomal subunit.

Its function is as follows. This protein binds to the 23S rRNA, and is important in its secondary structure. It is located near the subunit interface in the base of the L7/L12 stalk, and near the tRNA binding site of the peptidyltransferase center. The protein is Large ribosomal subunit protein uL6 of Lactobacillus delbrueckii subsp. bulgaricus (strain ATCC 11842 / DSM 20081 / BCRC 10696 / JCM 1002 / NBRC 13953 / NCIMB 11778 / NCTC 12712 / WDCM 00102 / Lb 14).